A 204-amino-acid polypeptide reads, in one-letter code: Somatotropin (204 aa).

The signal sequence occupies residues Met-1–Ser-17. At Gln-18 the chain carries Pyrrolidone carboxylic acid. Zn(2+) is bound at residue His-36. A disulfide bridge links Cys-69 with Cys-177. Glu-186 provides a ligand contact to Zn(2+). Cys-194 and Cys-202 are disulfide-bonded.

The protein belongs to the somatotropin/prolactin family.

It is found in the secreted. In terms of biological role, growth hormone plays an important role in growth control and is involved in the regulation of several anabolic processes. Implicated as an osmoregulatory substance important for seawater adaptation. This is Somatotropin (gh) from Acanthopagrus latus (Yellowfin seabream).